We begin with the raw amino-acid sequence, 493 residues long: 3-octaprenyl-4-hydroxybenzoate carboxy-lyase (493 aa).

Asn-172 provides a ligand contact to Mn(2+). Prenylated FMN-binding positions include 175–177 (IYR), 189–191 (RWL), and 194–195 (RG). Glu-238 is a Mn(2+) binding site. Residue Asp-287 is the Proton donor of the active site.

This sequence belongs to the UbiD family. As to quaternary structure, homohexamer. Requires prenylated FMN as cofactor. Mn(2+) is required as a cofactor.

The protein localises to the cell membrane. The enzyme catalyses a 4-hydroxy-3-(all-trans-polyprenyl)benzoate + H(+) = a 2-(all-trans-polyprenyl)phenol + CO2. The protein operates within cofactor biosynthesis; ubiquinone biosynthesis. In terms of biological role, catalyzes the decarboxylation of 3-octaprenyl-4-hydroxy benzoate to 2-octaprenylphenol, an intermediate step in ubiquinone biosynthesis. This chain is 3-octaprenyl-4-hydroxybenzoate carboxy-lyase, found in Shewanella frigidimarina (strain NCIMB 400).